The primary structure comprises 170 residues: Large ribosomal subunit protein bL17 (170 aa).

Positions 124-134 (AAEAPKAAKAA) are enriched in low complexity. The segment at 124–170 (AAEAPKAAKAAPVKEAKPAAEEAPAKPKRTRKPKADEADAEAAKEEN) is disordered. 2 stretches are compositionally biased toward basic and acidic residues: residues 135–148 (PVKEAKPAAEEAPA) and 156–170 (PKADEADAEAAKEEN).

This sequence belongs to the bacterial ribosomal protein bL17 family. Part of the 50S ribosomal subunit. Contacts protein L32.

The protein is Large ribosomal subunit protein bL17 of Desulfovibrio desulfuricans (strain ATCC 27774 / DSM 6949 / MB).